The following is a 401-amino-acid chain: Putative phosphatidylinositol 4-phosphate 5-kinase 11 (401 aa).

Positions 1-390 (MELRATVENR…RFQDFVSNIF (390 aa)) constitute a PIPK domain. A compositionally biased stretch (polar residues) spans 242–260 (SFKSNSTKSMKTASSSPDR). The segment at 242–268 (SFKSNSTKSMKTASSSPDRSSVAMYSC) is disordered. The activation loop stretch occupies residues 350-371 (YGMKKRIEHCYKSIQYNSNSIS).

The catalysed reaction is a 1,2-diacyl-sn-glycero-3-phospho-(1D-myo-inositol 4-phosphate) + ATP = a 1,2-diacyl-sn-glycero-3-phospho-(1D-myo-inositol-4,5-bisphosphate) + ADP + H(+). The protein is Putative phosphatidylinositol 4-phosphate 5-kinase 11 (PIP5K11) of Arabidopsis thaliana (Mouse-ear cress).